We begin with the raw amino-acid sequence, 433 residues long: Probable mannan endo-1,4-beta-mannosidase F (433 aa).

Positions 1–19 (MKRQALTLIPLLGAAAAQS) are cleaved as a signal peptide. A CBM1 domain is found at 20 to 53 (GPYGQCGGNDWSGATTCVSGYVCVYQNEWYSQCV). The thr-rich linker stretch occupies residues 56–82 (TATSSSTTLTTTTSATTRTTTTTTSTT). A catalytic region spans residues 83 to 433 (SVPSSTNFPS…TEHMERIAAR (351 aa)). Residue asparagine 97 is glycosylated (N-linked (GlcNAc...) asparagine). Substrate is bound by residues tryptophan 142 and asparagine 255. Glutamate 256 serves as the catalytic Proton donor. Tyrosine 331 provides a ligand contact to substrate. Glutamate 364 functions as the Nucleophile in the catalytic mechanism. Substrate is bound at residue tryptophan 394.

This sequence belongs to the glycosyl hydrolase 5 (cellulase A) family.

It is found in the secreted. It catalyses the reaction Random hydrolysis of (1-&gt;4)-beta-D-mannosidic linkages in mannans, galactomannans and glucomannans.. Endo-1,4-mannanase, a crucial enzyme for depolymerization of seed galactomannans and wood galactoglucomannans. The protein is Probable mannan endo-1,4-beta-mannosidase F (manF) of Emericella nidulans (strain FGSC A4 / ATCC 38163 / CBS 112.46 / NRRL 194 / M139) (Aspergillus nidulans).